A 544-amino-acid chain; its full sequence is Putative ankyrin repeat protein L289 (544 aa).

11 ANK repeats span residues 31–71 (KNFS…AQNE), 72–105 (HGWT…DPNI), 110–143 (YSQT…DINH), 147–181 (LGVS…DINS), 185–218 (QGNT…DPNI), 222–255 (KGTT…NINF), 259–297 (YNET…DIPI), 300–339 (DKLS…IQCS), 340–374 (NGKT…NPNI), 378–413 (QGKT…TIDN), and 414–447 (TGQS…CVNK).

In Acanthamoeba polyphaga mimivirus (APMV), this protein is Putative ankyrin repeat protein L289.